A 166-amino-acid chain; its full sequence is Small ribosomal subunit protein uS5 (166 aa).

The region spanning 11–74 (LQEKLIAVNR…EKARRNMINV (64 aa)) is the S5 DRBM domain.

It belongs to the universal ribosomal protein uS5 family. As to quaternary structure, part of the 30S ribosomal subunit. Contacts proteins S4 and S8.

Functionally, with S4 and S12 plays an important role in translational accuracy. In terms of biological role, located at the back of the 30S subunit body where it stabilizes the conformation of the head with respect to the body. The chain is Small ribosomal subunit protein uS5 from Haemophilus ducreyi (strain 35000HP / ATCC 700724).